A 428-amino-acid chain; its full sequence is Homocitrate synthase, cytosolic isozyme (428 aa).

The region spanning 23-276 is the Pyruvate carboxyltransferase domain; sequence FQLIDSTLRE…KSKYKLHKIR (254 aa). R31 is a 2-oxoglutarate binding site. E32 is a Mg(2+) binding site. 2-oxoglutarate is bound by residues H91, R151, and T185. Residues H212 and H214 each contribute to the Mg(2+) site. H309 serves as the catalytic Proton acceptor. S385 bears the Phosphoserine mark. T396 carries the post-translational modification Phosphothreonine. The disordered stretch occupies residues 399–428; the sequence is VLSAKKNKKNDSDVPELATIPAAKRTKPSA. Phosphoserine occurs at positions 401 and 410.

It belongs to the alpha-IPM synthase/homocitrate synthase family. Homocitrate synthase LYS20/LYS21 subfamily. Mg(2+) serves as cofactor. It depends on Mn(2+) as a cofactor.

It is found in the cytoplasm. The enzyme catalyses acetyl-CoA + 2-oxoglutarate + H2O = (2R)-homocitrate + CoA + H(+). It functions in the pathway amino-acid biosynthesis; L-lysine biosynthesis via AAA pathway; L-alpha-aminoadipate from 2-oxoglutarate: step 1/5. Its function is as follows. Catalyzes the aldol-type condensation of 2-oxoglutarate with acetyl-CoA to yield homocitrate. Carries out the first step of the alpha-aminoadipate (AAA) lysine biosynthesis pathway. The chain is Homocitrate synthase, cytosolic isozyme (LYS20) from Saccharomyces cerevisiae (strain ATCC 204508 / S288c) (Baker's yeast).